Consider the following 78-residue polypeptide: MAESTTTCFLLLVTGYVTAVMSEEAHLRSRRDFGCGQGMIFMCQRRCMRLYPGSTGFCRGFRCMCDTHIPLRPPFMVG.

The signal sequence occupies residues 1-22; sequence MAESTTTCFLLLVTGYVTAVMS. A propeptide spanning residues 23 to 29 is cleaved from the precursor; it reads EEAHLRS. Cystine bridges form between C35-C58, C43-C63, and C47-C65.

As to expression, salivary glands (at protein level).

Its subcellular location is the secreted. Functionally, has antibacterial activity against the Gram-positive bacteria S.aureus ATCC2592 (MIC=0.8 ug/ml), S.aureus 6A (MIC=0.8 ug/ml) and S.aureus 15A (MIC=1.6 ug/ml), and against the Gram-negative bacteria E.coli ATCC 25922 (MIC=3.2 ug/ml), E.coli 23A (MIC=6.4 ug/ml), E.coli 27A (MIC=6.4 ug/ml), P.aeruginosa 3A (MIC=3.2 ug/ml), P.aeruginosa 7A (MIC=0.8 ug/ml) and H.pylori NCTC11637 (MIC=6.4 ug/ml). Has antifungal activity against C.albidus ATCC2002 (MIC=25.6 ug/ml). Very low hemolytic activity against rabbit erythrocytes. This Haemaphysalis longicornis (Bush tick) protein is Longicornsin.